The following is an 805-amino-acid chain: Cell division cycle protein 48 homolog (805 aa).

Residues 249–256 (GPPGSGKT) and 522–529 (GPPGCGKT) contribute to the ATP site. The tract at residues 783-805 (GATAAADPFATSNAAADDDDLYS) is disordered.

Belongs to the AAA ATPase family.

Functionally, probably functions in cell division and growth processes. The protein is Cell division cycle protein 48 homolog (CAFP) of Capsicum annuum (Capsicum pepper).